The primary structure comprises 177 residues: MRYSNKQTSNIHELQEKLITVNRVSKTVKGGRVFSFAALTVVGNVNGRVGFGYGKAREVPSAIQKAMEKARHNMIDIPLNPGRTLQHSIIGIYTGARIYMKPASEGTGIIAGGAMRAILEVVGIHNVLAKAYGSTNPINIVRATVNALKNMKSPEMVAEKRGKSLEYILNNYTYNGR.

The region spanning 14 to 77 (LQEKLITVNR…EKARHNMIDI (64 aa)) is the S5 DRBM domain.

The protein belongs to the universal ribosomal protein uS5 family. In terms of assembly, part of the 30S ribosomal subunit. Contacts proteins S4 and S8.

Its function is as follows. With S4 and S12 plays an important role in translational accuracy. Located at the back of the 30S subunit body where it stabilizes the conformation of the head with respect to the body. This Blochmanniella floridana protein is Small ribosomal subunit protein uS5.